The chain runs to 100 residues: Large ribosomal subunit protein bL21 (100 aa).

The protein belongs to the bacterial ribosomal protein bL21 family. As to quaternary structure, part of the 50S ribosomal subunit. Contacts protein L20.

In terms of biological role, this protein binds to 23S rRNA in the presence of protein L20. The polypeptide is Large ribosomal subunit protein bL21 (Mycoplasma mycoides subsp. mycoides SC (strain CCUG 32753 / NCTC 10114 / PG1)).